The chain runs to 441 residues: Protein eva-1 homolog C (441 aa).

The tract at residues 1 to 23 is disordered; that stretch reads MLLPGPARQPPTPQPVQHPGLRR. Residues 1–48 form the signal peptide; that stretch reads MLLPGPARQPPTPQPVQHPGLRRQVEPPGQLLRLFYCTVLVCSKEISA. Pro residues predominate over residues 7–16; it reads ARQPPTPQPV. The Extracellular segment spans residues 49-322; that stretch reads LTDFSGYLTK…AYIRAHPERA (274 aa). N-linked (GlcNAc...) asparagine glycosylation occurs at N62. An SUEL-type lectin 1 domain is found at 67–159; sequence ACDGDYLNLQ…KYLLVSFKCQ (93 aa). The N-linked (GlcNAc...) asparagine glycan is linked to N165. The 93-residue stretch at 168–260 folds into the SUEL-type lectin 2 domain; that stretch reads VCEDQELKLH…KYLTVTYACV (93 aa). The helical transmembrane segment at 323–343 threads the bilayer; sequence ALLFVSSVCIGLALTLCALVI. Residues 344 to 441 lie on the Cytoplasmic side of the membrane; sequence RESCAKDFRD…SLPRNMGQFY (98 aa). The disordered stretch occupies residues 362 to 391; sequence VPGSDKVEEDSEDEEEEEDSSESDFPGELS. Acidic residues predominate over residues 368 to 383; the sequence is VEEDSEDEEEEEDSSE.

The protein belongs to the EVA1 family.

Its subcellular location is the cell membrane. Its function is as follows. Binds heparin. This chain is Protein eva-1 homolog C (EVA1C), found in Pan troglodytes (Chimpanzee).